The following is a 236-amino-acid chain: Adenosine 5'-phosphosulfate reductase 2 (236 aa).

4 residues coordinate [4Fe-4S] cluster: cysteine 122, cysteine 123, cysteine 205, and cysteine 208. The segment at 216 to 236 is disordered; the sequence is NDERAGRWAGREKTECGLHQE. Cysteine 231 serves as the catalytic Nucleophile; cysteine thiosulfonate intermediate.

The protein belongs to the PAPS reductase family. CysH subfamily. [4Fe-4S] cluster serves as cofactor.

The protein resides in the cytoplasm. The enzyme catalyses [thioredoxin]-disulfide + sulfite + AMP + 2 H(+) = adenosine 5'-phosphosulfate + [thioredoxin]-dithiol. Its pathway is sulfur metabolism; hydrogen sulfide biosynthesis; sulfite from sulfate. Functionally, catalyzes the formation of sulfite from adenosine 5'-phosphosulfate (APS) using thioredoxin as an electron donor. The chain is Adenosine 5'-phosphosulfate reductase 2 from Bacillus subtilis (strain 168).